A 1126-amino-acid polypeptide reads, in one-letter code: MARPIFPNQQKIAEKLIILNDRGLGILTRIYNIKKACGDTKSKPGFLSEKSLESSIKFIVKRFPNIDVKGLNAIVNIKAEIIKSLSLYYHTFVDLLDFKDNVCELLTTMDACQIHLDITLNFELTKYYLDLVVTYVSLMIVLSRVEDRKAVLGLYNAAYELQNNQADTGFPRLGQMILDYEVPLKKLAEEFIPHQRLLTSALRSLTSIYALRNLPADKWREMQKLSLVGNPAILLKAVRTDTMSCEYISLEAMDRWIIFGLLLNHQMLGQYPEVNKIWLSALESSWVVALFRDEVLQIHQYIQATFDGIKGYSKRIGEVKEAYNTAVQKAALMHRERRKFLRTALKELALIMTDQPGLLGPKAIFIFIGLCLARDEILWLLRHNDNPPLLKNKGKSNEDLVDRQLPELLFHMEELRALVRKYSQVMQRYYVQYLSGFDATDLNIRMQSLQMCPEDESIIFSSLYNTAAALTVKQVEDNELFYFRPFRLDWFRLQTYMSVGKAALRIAEHAELARLLDSMVFHTRVVDNLDEILVETSDLSIFCFYNKMFDDQFHMCLEFPAQNRYIIAFPLICSHFQNCTHEMCPEERHHIRERSLSVVNIFLEEMAKEAKNIITTICDEQCTMADALLPKHCAKILSVQSARKKKDKSKSKHFDDIRKPGDESYRKTREDLTTMDKLHMALTELCFAINYCPTVNVWEFAFAPREYLCQNLEHRFSRDLVGMVMFNQETMEIAKPSELLASVRAYMNVLQTVENYVHIDITRVFNNCLLQQTQALDSHGEKTIAALYNTWYSEVLLRRVSAGNIVFSINQKAFVPISPEGWVPFNPQEFSDLNELRALAELVGPYGIKTLNETLMWHIANQVQELKSLVSTNKEVLITLRTSFDKPEVMKEQFKRLQDVDRVLQRMTIIGVIICFRNLVHEALVDVLDKRIPFLLSSVKDFQEHLPGGDQIRVASEMASAAGLLCKVDPTLATTLKSKKPEFDEGEHLTACLLMVFVAVSIPKLARNENSFYRATIDGHSNNTHCMAAAINNIFGALFTICGQSDMEDRMKEFLALASSSLLRLGQESDKEATRNRESIYLLLDEIVKQSPFLTMDLLESCFPYVLIRNAYHGVYKQEQILGLAL.

Residues 989–1006 (LTACLLMVFVAVSIPKLA) traverse the membrane as a helical segment.

It belongs to the HEM-1/HEM-2 family. As to quaternary structure, component of the WAVE complex composed of Hem/Kette, Scar/Wave and Cyfip where it binds directly to the C-terminus of Cyfip.

It localises to the cell membrane. Functionally, plays a role during growth of the oocyte. This chain is Membrane-associated protein Hem (Hem), found in Drosophila melanogaster (Fruit fly).